The chain runs to 266 residues: Nuclease (266 aa).

The signal sequence occupies residues 1 to 21 (MRFNNKMLALAALLFAAQASA). An intrachain disulfide couples C30 to C34. The Proton acceptor role is filled by H110. N140 is a binding site for Mg(2+). C222 and C264 are disulfide-bonded.

Belongs to the DNA/RNA non-specific endonuclease family. Homodimer. Mg(2+) is required as a cofactor.

It localises to the secreted. It catalyses the reaction Endonucleolytic cleavage to 5'-phosphomononucleotide and 5'-phosphooligonucleotide end-products.. Functionally, catalyzes the hydrolysis of both DNA and RNA, double- or single-stranded, at the 3'position of the phosphodiester bond to produce 5'-phosphorylated mono-, di-, tri- and tetranucleotides. DNA is a slightly better substrate than RNA. The sequence is that of Nuclease (nucA) from Serratia marcescens.